A 619-amino-acid chain; its full sequence is Dihydroxy-acid dehydratase (619 aa).

D81 contributes to the Mg(2+) binding site. C122 serves as a coordination point for [2Fe-2S] cluster. Mg(2+) contacts are provided by D123 and K124. Position 124 is an N6-carboxylysine (K124). C195 provides a ligand contact to [2Fe-2S] cluster. Residue E494 coordinates Mg(2+). S520 functions as the Proton acceptor in the catalytic mechanism.

The protein belongs to the IlvD/Edd family. As to quaternary structure, homodimer. [2Fe-2S] cluster serves as cofactor. It depends on Mg(2+) as a cofactor.

It catalyses the reaction (2R)-2,3-dihydroxy-3-methylbutanoate = 3-methyl-2-oxobutanoate + H2O. The enzyme catalyses (2R,3R)-2,3-dihydroxy-3-methylpentanoate = (S)-3-methyl-2-oxopentanoate + H2O. It functions in the pathway amino-acid biosynthesis; L-isoleucine biosynthesis; L-isoleucine from 2-oxobutanoate: step 3/4. It participates in amino-acid biosynthesis; L-valine biosynthesis; L-valine from pyruvate: step 3/4. In terms of biological role, functions in the biosynthesis of branched-chain amino acids. Catalyzes the dehydration of (2R,3R)-2,3-dihydroxy-3-methylpentanoate (2,3-dihydroxy-3-methylvalerate) into 2-oxo-3-methylpentanoate (2-oxo-3-methylvalerate) and of (2R)-2,3-dihydroxy-3-methylbutanoate (2,3-dihydroxyisovalerate) into 2-oxo-3-methylbutanoate (2-oxoisovalerate), the penultimate precursor to L-isoleucine and L-valine, respectively. The chain is Dihydroxy-acid dehydratase from Shewanella oneidensis (strain ATCC 700550 / JCM 31522 / CIP 106686 / LMG 19005 / NCIMB 14063 / MR-1).